The primary structure comprises 858 residues: MGLIKKIFGTHSEREIKLIRPTADKIEALEPDMMKLSDDELRGKTIEFKNRLKNGETLDDILVEAYAVVREAAKRTLGNRAYYVQLLGGIILHQGRISEMRTGEGKTLTSTFPAYLNALEGEGVHIVTVNDYLAKRDAEWMGEVHRFLGLSVGCILNDMDNDERRKAYNCDITYATNNELGFDYLRDNMVIYKEQLVMRDLHFAIIDEVDSVLIDEARTPLIISGQSGKSTRLYEACDILARQLTKGTAKELSKMDIIMKEDDQETGDFVVNEKEKAVNLTAEGVEKVERFFKIENLADPENLEIQHNIILALRAHYLMAIDKDYVVKDDEVLIVDDFTGRIMPGRRYSDGLHQAIEAKEHVKVKRESKTLATITFQNFFNKYTKKCGMTGTALTEENEFREIYGMDVVEVPTNRPVARIDKDDAVYRTKREKLNAVINAIVEAHKAGQPVLVGTITIEASEEISELLKKKNIPHKVLNAKFHELEAEIIADAGQKGAVTIATNMAGRGTDIKLGEGVTELGGLKIIGTERHESRRIDNQLRGRSGRQGDPGESCFYICLEDDLMRLFGSERLNTIFKSLGLPEGEQIEHKMLSGAIEKAQKKIEDNNFGIRKNLLEYDKVNNEQREIIYAERRKVLNGDSMRDVIFKMITDNVETCVNTSISDDQLPEEWDLAELNQMLLPIIPMEPVELKDNELRHMKRNELIHMLKEKAVKLYEEKEAEFPEKEHLREVERVVLLRVIDRKWMDHIDDMDQLRQGIGLQAYGQRDPKTEYKFSGFEMFDTMINAITEDTVKALMHVRIEQKVEREEVAKVTGTNRDESVAKAPVKRATKKVQPNDPCPCGSGKKYKHCCGGVGRI.

ATP contacts are provided by residues glutamine 85, glycine 103–threonine 107, and aspartate 511. Positions 840, 842, 851, and 852 each coordinate Zn(2+).

Belongs to the SecA family. Monomer and homodimer. Part of the essential Sec protein translocation apparatus which comprises SecA, SecYEG and auxiliary proteins SecDF. Other proteins may also be involved. Zn(2+) is required as a cofactor.

Its subcellular location is the cell membrane. It localises to the cytoplasm. It catalyses the reaction ATP + H2O + cellular proteinSide 1 = ADP + phosphate + cellular proteinSide 2.. Its function is as follows. Part of the Sec protein translocase complex. Interacts with the SecYEG preprotein conducting channel. Has a central role in coupling the hydrolysis of ATP to the transfer of proteins into and across the cell membrane, serving as an ATP-driven molecular motor driving the stepwise translocation of polypeptide chains across the membrane. The protein is Protein translocase subunit SecA of Lachnoclostridium phytofermentans (strain ATCC 700394 / DSM 18823 / ISDg) (Clostridium phytofermentans).